Here is a 292-residue protein sequence, read N- to C-terminus: Probable xyloglucan endotransglucosylase/hydrolase protein 6 (292 aa).

The first 30 residues, 1 to 30, serve as a signal peptide directing secretion; that stretch reads MAKIYSPSFPGTLCLCIFTLLTLMFIRVSA. One can recognise a GH16 domain in the interval 31 to 224; that stretch reads RPATFVEDFK…WSKAPFYAYY (194 aa). Residue Glu110 is the Nucleophile of the active site. Catalysis depends on Glu114, which acts as the Proton donor. Glu114 lines the xyloglucan pocket. Asn118 is a glycosylation site (N-linked (GlcNAc...) asparagine). Xyloglucan-binding positions include 127 to 129, 137 to 139, 203 to 204, and Gly208; these read QTN, DRE, and DW. Disulfide bonds link Cys232-Cys240 and Cys277-Cys290. Arg282 is a binding site for xyloglucan.

Belongs to the glycosyl hydrolase 16 family. XTH group 1 subfamily. In terms of processing, contains at least one intrachain disulfide bond essential for its enzymatic activity.

It localises to the secreted. It is found in the cell wall. Its subcellular location is the extracellular space. The protein localises to the apoplast. It catalyses the reaction breaks a beta-(1-&gt;4) bond in the backbone of a xyloglucan and transfers the xyloglucanyl segment on to O-4 of the non-reducing terminal glucose residue of an acceptor, which can be a xyloglucan or an oligosaccharide of xyloglucan.. In terms of biological role, catalyzes xyloglucan endohydrolysis (XEH) and/or endotransglycosylation (XET). Cleaves and religates xyloglucan polymers, an essential constituent of the primary cell wall, and thereby participates in cell wall construction of growing tissues. This Arabidopsis thaliana (Mouse-ear cress) protein is Probable xyloglucan endotransglucosylase/hydrolase protein 6 (XTH6).